The primary structure comprises 462 residues: Glycine--tRNA ligase (462 aa).

The substrate site is built by Arg-98 and Glu-174. Residues 206-208, 216-221, 290-291, and 334-337 contribute to the ATP site; these read RNE, FRTREF, EL, and GADR. Substrate is bound at residue 221 to 225; that stretch reads FEQME. 330–334 contacts substrate; sequence EPSLG.

This sequence belongs to the class-II aminoacyl-tRNA synthetase family. As to quaternary structure, homodimer.

The protein localises to the cytoplasm. The catalysed reaction is tRNA(Gly) + glycine + ATP = glycyl-tRNA(Gly) + AMP + diphosphate. Catalyzes the attachment of glycine to tRNA(Gly). The chain is Glycine--tRNA ligase from Lachnospira eligens (strain ATCC 27750 / DSM 3376 / VPI C15-48 / C15-B4) (Eubacterium eligens).